The primary structure comprises 329 residues: Biotin--protein ligase 2 (329 aa).

In terms of domain architecture, BPL/LPL catalytic spans 67-251 (ISTHRFGRFL…KFENFFDLFM (185 aa)). Biotin is bound by residues 84–85 (ST), Gln107, 111–113 (RGR), and Lys182.

The protein belongs to the biotin--protein ligase family. Highly expressed in seeds. Expressed in roots, leaves, stems, flowers and siliques.

It localises to the cytoplasm. Its function is as follows. Seems to have no or limited implication in biotin-dependent carboxylase biotinylation in planta. The sequence is that of Biotin--protein ligase 2 (HCS2) from Arabidopsis thaliana (Mouse-ear cress).